We begin with the raw amino-acid sequence, 476 residues long: Monofunctional riboflavin biosynthesis protein RIBA 2, chloroplastic (476 aa).

The transit peptide at 1–54 (MASLTLRCDSTHLLPSRDVVKGTKPFGTSLVYPRIISKKFNVRMRVIPEEGDVF) directs the protein to the chloroplast. The DHBP synthase stretch occupies residues 44-306 (MRVIPEEGDV…IADLIRYRRK (263 aa)). D-ribulose 5-phosphate is bound by residues 130-131 (RE), D135, 245-249 (RAGHT), and E269. E131 contributes to the Mg(2+) binding site. H248 is a Mg(2+) binding site. An inactive GTP cyclohydrolase II region spans residues 307–476 (RERLVEFTAV…SGKVPLITTP (170 aa)). Residues 357–361 (RVHAE), Q376, 399–401 (ESK), and T450 contribute to the GTP site.

The protein in the N-terminal section; belongs to the DHBP synthase family. In the C-terminal section; belongs to the GTP cyclohydrolase II family. It depends on Mg(2+) as a cofactor. The cofactor is Mn(2+). Expressed in leaves, shoots, roots, flowers and siliques.

It localises to the plastid. The protein localises to the chloroplast. The enzyme catalyses D-ribulose 5-phosphate = (2S)-2-hydroxy-3-oxobutyl phosphate + formate + H(+). Its pathway is cofactor biosynthesis; riboflavin biosynthesis; 2-hydroxy-3-oxobutyl phosphate from D-ribulose 5-phosphate: step 1/1. In terms of biological role, involved in riboflavin biosynthesis. Catalyzes the conversion of D-ribulose 5-phosphate to formate and 3,4-dihydroxy-2-butanone 4-phosphate. RIBA2 and RIBA3 together are not able to complement the loss of function of RIBA1. The sequence is that of Monofunctional riboflavin biosynthesis protein RIBA 2, chloroplastic (RIBA2) from Arabidopsis thaliana (Mouse-ear cress).